A 142-amino-acid chain; its full sequence is Large ribosomal subunit protein uL13 (142 aa).

This sequence belongs to the universal ribosomal protein uL13 family. In terms of assembly, part of the 50S ribosomal subunit.

Its function is as follows. This protein is one of the early assembly proteins of the 50S ribosomal subunit, although it is not seen to bind rRNA by itself. It is important during the early stages of 50S assembly. In Ectopseudomonas mendocina (strain ymp) (Pseudomonas mendocina), this protein is Large ribosomal subunit protein uL13.